The chain runs to 568 residues: uncharacterized protein (568 aa).

This is an uncharacterized protein from Rickettsia prowazekii (strain Madrid E).